Consider the following 329-residue polypeptide: Cathepsin K (329 aa).

An N-terminal signal peptide occupies residues 1–15; it reads MWGLKVLLLPVVSFA. Positions 16–114 are cleaved as a propeptide — activation peptide; the sequence is LHPEEILDTQ…TLYIPDWEGR (99 aa). N103 is a glycosylation site (N-linked (GlcNAc...) asparagine). Disulfide bonds link C136–C177 and C170–C210. C139 is an active-site residue. Residue N268 is glycosylated (N-linked (GlcNAc...) asparagine). A disulfide bridge connects residues C269 and C318. Catalysis depends on residues H276 and N296.

The protein belongs to the peptidase C1 family. As to expression, predominantly expressed in osteclasts (bones).

It localises to the lysosome. The protein resides in the secreted. Its subcellular location is the apical cell membrane. The catalysed reaction is Broad proteolytic activity. With small-molecule substrates and inhibitors, the major determinant of specificity is P2, which is preferably Leu, Met &gt; Phe, and not Arg.. In terms of biological role, thiol protease involved in osteoclastic bone resorption and may participate partially in the disorder of bone remodeling. Displays potent endoprotease activity against fibrinogen at acid pH. May play an important role in extracellular matrix degradation. Involved in the release of thyroid hormone thyroxine (T4) by limited proteolysis of TG/thyroglobulin in the thyroid follicle lumen. This Oryctolagus cuniculus (Rabbit) protein is Cathepsin K (CTSK).